The following is an 879-amino-acid chain: Valine--tRNA ligase (879 aa).

A 'HIGH' region motif is present at residues 43 to 53 (PNVTGVLHMGH). Positions 534–538 (KMSKS) match the 'KMSKS' region motif. Residue K537 participates in ATP binding. Residues 807-878 (LGNMIDVEAE…LKESIAALKK (72 aa)) adopt a coiled-coil conformation.

This sequence belongs to the class-I aminoacyl-tRNA synthetase family. ValS type 1 subfamily. As to quaternary structure, monomer.

Its subcellular location is the cytoplasm. The catalysed reaction is tRNA(Val) + L-valine + ATP = L-valyl-tRNA(Val) + AMP + diphosphate. Its function is as follows. Catalyzes the attachment of valine to tRNA(Val). As ValRS can inadvertently accommodate and process structurally similar amino acids such as threonine, to avoid such errors, it has a 'posttransfer' editing activity that hydrolyzes mischarged Thr-tRNA(Val) in a tRNA-dependent manner. This Bacteroides thetaiotaomicron (strain ATCC 29148 / DSM 2079 / JCM 5827 / CCUG 10774 / NCTC 10582 / VPI-5482 / E50) protein is Valine--tRNA ligase.